A 255-amino-acid polypeptide reads, in one-letter code: F-box/SPRY domain-containing protein 1 (255 aa).

Residues 3–51 enclose the F-box domain; it reads DPVAALCNYNVLEVIFSYLELDDLSHCSQVCKSWNLFLNDENSDVWRWH. The 193-residue stretch at 61–253 folds into the B30.2/SPRY domain; the sequence is LKSDLLSSVS…VSMVYLGTPM (193 aa).

This sequence belongs to the FBXO45/Fsn family. As to quaternary structure, component of an E3 ubiquitin ligase complex composed of hiw and Fsn.

The protein localises to the synapse. It participates in protein modification; protein ubiquitination. Its function is as follows. Required in the presynaptic motoneuron to down-regulate the levels of wnd and restrain synaptic terminal growth at the neuromuscular junction (NMJ). This is F-box/SPRY domain-containing protein 1 from Drosophila ananassae (Fruit fly).